A 360-amino-acid polypeptide reads, in one-letter code: Membrane-bound lytic murein transglycosylase C (360 aa).

An N-terminal signal peptide occupies residues methionine 1–serine 16. A lipid anchor (N-palmitoyl cysteine) is attached at cysteine 17. Cysteine 17 carries S-diacylglycerol cysteine lipidation.

Belongs to the transglycosylase Slt family.

The protein resides in the cell outer membrane. The catalysed reaction is Exolytic cleavage of the (1-&gt;4)-beta-glycosidic linkage between N-acetylmuramic acid (MurNAc) and N-acetylglucosamine (GlcNAc) residues in peptidoglycan, from either the reducing or the non-reducing ends of the peptidoglycan chains, with concomitant formation of a 1,6-anhydrobond in the MurNAc residue.. Murein-degrading enzyme. May play a role in recycling of muropeptides during cell elongation and/or cell division. The protein is Membrane-bound lytic murein transglycosylase C of Salmonella arizonae (strain ATCC BAA-731 / CDC346-86 / RSK2980).